The following is a 564-amino-acid chain: MFS-type transporter grgE (564 aa).

The segment covering 1–10 (MAENQVDPKR) has biased composition (basic and acidic residues). The disordered stretch occupies residues 1 to 52 (MAENQVDPKRNLPLYGAADESTSATDKEDEVENVRQNGSAPPIEEARESNEA). Asn-37 is a glycosylation site (N-linked (GlcNAc...) asparagine). 7 helical membrane passes run 60–80 (HGLS…IISL), 101–118 (KVSW…GFQT), 131–151 (TTFL…GVAP), 161–181 (AIAG…IAFS), 192–212 (GLVG…GGAF), 220–240 (WCFY…LIFF), and 262–282 (LVGV…LQYG). Asn-289 is a glycosylation site (N-linked (GlcNAc...) asparagine). 7 consecutive transmembrane segments (helical) span residues 293–313 (VIGL…WEYY), 329–349 (ALWA…ILLY), 368–388 (VRNL…GAFV), 392–412 (GIAT…TGLI), 425–445 (IGYQ…PMNI), 462–482 (IFLA…SAFV), and 531–551 (TFAI…FTPW).

This sequence belongs to the major facilitator superfamily.

The protein localises to the membrane. In terms of biological role, MFS-type transporter; part of the gene cluster that mediates the biosynthesis of gregatin A, a fungal polyketide featuring an alkylated furanone core. This is MFS-type transporter grgE from Penicillium sp.